Reading from the N-terminus, the 134-residue chain is Large ribosomal subunit protein bL20 (134 aa).

It belongs to the bacterial ribosomal protein bL20 family.

Binds directly to 23S ribosomal RNA and is necessary for the in vitro assembly process of the 50S ribosomal subunit. It is not involved in the protein synthesizing functions of that subunit. The polypeptide is Large ribosomal subunit protein bL20 (Allorhizobium ampelinum (strain ATCC BAA-846 / DSM 112012 / S4) (Agrobacterium vitis (strain S4))).